The primary structure comprises 375 residues: Chaperone protein DnaJ (375 aa).

One can recognise a J domain in the interval 4 to 68 (DYYEILGVSR…ETRARYDRFG (65 aa)). The segment at 135–217 (GGEKEIRISH…CDGKGANQVT (83 aa)) adopts a CR-type zinc-finger fold. Residues cysteine 148, cysteine 151, cysteine 165, cysteine 168, cysteine 191, cysteine 194, cysteine 205, and cysteine 208 each coordinate Zn(2+). CXXCXGXG motif repeat units lie at residues 148–155 (CEVCSGSG), 165–172 (CSTCSGSG), 191–198 (CPTCNGTG), and 205–212 (CDACDGKG).

The protein belongs to the DnaJ family. In terms of assembly, homodimer. Zn(2+) serves as cofactor.

Its subcellular location is the cytoplasm. Functionally, participates actively in the response to hyperosmotic and heat shock by preventing the aggregation of stress-denatured proteins and by disaggregating proteins, also in an autonomous, DnaK-independent fashion. Unfolded proteins bind initially to DnaJ; upon interaction with the DnaJ-bound protein, DnaK hydrolyzes its bound ATP, resulting in the formation of a stable complex. GrpE releases ADP from DnaK; ATP binding to DnaK triggers the release of the substrate protein, thus completing the reaction cycle. Several rounds of ATP-dependent interactions between DnaJ, DnaK and GrpE are required for fully efficient folding. Also involved, together with DnaK and GrpE, in the DNA replication of plasmids through activation of initiation proteins. The polypeptide is Chaperone protein DnaJ (Nostoc punctiforme (strain ATCC 29133 / PCC 73102)).